Here is a 179-residue protein sequence, read N- to C-terminus: Dual-action ribosomal maturation protein DarP (179 aa).

This sequence belongs to the DarP family.

The protein resides in the cytoplasm. In terms of biological role, member of a network of 50S ribosomal subunit biogenesis factors which assembles along the 30S-50S interface, preventing incorrect 23S rRNA structures from forming. Promotes peptidyl transferase center (PTC) maturation. The chain is Dual-action ribosomal maturation protein DarP from Photorhabdus laumondii subsp. laumondii (strain DSM 15139 / CIP 105565 / TT01) (Photorhabdus luminescens subsp. laumondii).